The sequence spans 448 residues: StAR-related lipid transfer protein 3 (448 aa).

Residues 47 to 219 form the MENTAL domain; the sequence is FSDVRRTFCL…YSPPESLAGS (173 aa). 4 consecutive transmembrane segments (helical) span residues 53-73, 96-116, 122-142, and 150-170; these read TFCL…IIEL, FFDI…GYAA, WWVI…KVIL, and AFGY…TWFL. The FFAT motif lies at 208–214; the sequence is QFYSPPE. The START domain maps to 232–445; sequence AVTEQEKAFV…LRQRINEVHV (214 aa).

Belongs to the STARD3 family. Homodimer. Post-translationally, phosphorylated. Phosphorylation allows the tethering of two membranes that participates in the formation of ER-endosome contacts. Phosphorylation of FFAT motif drives membrane tethering between the endoplasmic reticulum and late endosomes that in turn allows the efficient transport of sterol mediated by the START domain.

The protein localises to the late endosome membrane. The catalysed reaction is cholesterol(in) = cholesterol(out). Functionally, sterol-binding protein that mediates cholesterol transport from the endoplasmic reticulum to endosomes. The sterol transport mechanism is triggered by phosphorylation of FFAT motif that leads to membrane tethering between the endoplasmic reticulum and late endosomes. Acts as a lipid transfer protein that redirects sterol to the endosome at the expense of the cell membrane and favors membrane formation inside endosomes. In Danio rerio (Zebrafish), this protein is StAR-related lipid transfer protein 3.